Reading from the N-terminus, the 215-residue chain is 3-isopropylmalate dehydratase small subunit (215 aa).

It belongs to the LeuD family. LeuD type 1 subfamily. Heterodimer of LeuC and LeuD.

It carries out the reaction (2R,3S)-3-isopropylmalate = (2S)-2-isopropylmalate. The protein operates within amino-acid biosynthesis; L-leucine biosynthesis; L-leucine from 3-methyl-2-oxobutanoate: step 2/4. Catalyzes the isomerization between 2-isopropylmalate and 3-isopropylmalate, via the formation of 2-isopropylmaleate. In Teredinibacter turnerae (strain ATCC 39867 / T7901), this protein is 3-isopropylmalate dehydratase small subunit.